Reading from the N-terminus, the 172-residue chain is S-ribosylhomocysteine lyase (172 aa).

Fe cation is bound by residues His54, His58, and Cys128.

Belongs to the LuxS family. In terms of assembly, homodimer. It depends on Fe cation as a cofactor.

It carries out the reaction S-(5-deoxy-D-ribos-5-yl)-L-homocysteine = (S)-4,5-dihydroxypentane-2,3-dione + L-homocysteine. Functionally, involved in the synthesis of autoinducer 2 (AI-2) which is secreted by bacteria and is used to communicate both the cell density and the metabolic potential of the environment. The regulation of gene expression in response to changes in cell density is called quorum sensing. Catalyzes the transformation of S-ribosylhomocysteine (RHC) to homocysteine (HC) and 4,5-dihydroxy-2,3-pentadione (DPD). This chain is S-ribosylhomocysteine lyase, found in Vibrio alginolyticus.